Here is a 141-residue protein sequence, read N- to C-terminus: Large ribosomal subunit protein uL11 (141 aa).

This sequence belongs to the universal ribosomal protein uL11 family. Part of the ribosomal stalk of the 50S ribosomal subunit. Interacts with L10 and the large rRNA to form the base of the stalk. L10 forms an elongated spine to which L12 dimers bind in a sequential fashion forming a multimeric L10(L12)X complex. In terms of processing, one or more lysine residues are methylated.

Its function is as follows. Forms part of the ribosomal stalk which helps the ribosome interact with GTP-bound translation factors. The polypeptide is Large ribosomal subunit protein uL11 (Roseiflexus sp. (strain RS-1)).